We begin with the raw amino-acid sequence, 346 residues long: Biotin synthase (346 aa).

One can recognise a Radical SAM core domain in the interval 38–256 (QQVQVSTLLS…IAVARIMMPT (219 aa)). Cys53, Cys57, and Cys60 together coordinate [4Fe-4S] cluster. [2Fe-2S] cluster is bound by residues Cys97, Cys128, Cys188, and Arg260.

The protein belongs to the radical SAM superfamily. Biotin synthase family. In terms of assembly, homodimer. It depends on [4Fe-4S] cluster as a cofactor. The cofactor is [2Fe-2S] cluster.

It carries out the reaction (4R,5S)-dethiobiotin + (sulfur carrier)-SH + 2 reduced [2Fe-2S]-[ferredoxin] + 2 S-adenosyl-L-methionine = (sulfur carrier)-H + biotin + 2 5'-deoxyadenosine + 2 L-methionine + 2 oxidized [2Fe-2S]-[ferredoxin]. It functions in the pathway cofactor biosynthesis; biotin biosynthesis; biotin from 7,8-diaminononanoate: step 2/2. Its function is as follows. Catalyzes the conversion of dethiobiotin (DTB) to biotin by the insertion of a sulfur atom into dethiobiotin via a radical-based mechanism. The polypeptide is Biotin synthase (Salmonella newport (strain SL254)).